Here is a 1235-residue protein sequence, read N- to C-terminus: Cullin-associated NEDD8-dissociated protein 2 (1235 aa).

Residue serine 2 is modified to N-acetylserine. HEAT repeat units follow at residues 2-39, 44-81, 83-119, 129-167, 171-208, 210-246, 254-291, 326-367, 371-408, 431-468, 516-553, 564-603, 607-644, 647-684, 689-726, 730-769, 771-812, 856-893, 895-930, 932-965, 966-1002, 1006-1043, 1047-1083, 1104-1140, 1156-1193, and 1203-1235; these read STGA…KDSI, DSER…KVKE, QVEN…ELPP, NVCR…RLGA, TFHA…ACST, LFVE…SVGR, AHLD…KCPK, TEDS…SRPD, DFHC…HTRP, AQVP…VLPG, PHLP…TLWP, PYVG…HLGD, DDLE…LRLD, PILA…SQGL, PAVR…TQPS, EVSG…TRPP, VEYS…ALSA, GPQR…GNLP, FLPF…DNLK, YVED…LVFV, NPPY…DQPH, PLLK…NKPS, DLLD…DDGL, LDMC…LCPA, TCTA…NPEV, and SAQI…MELS. Residues 314–345 are disordered; it reads YDHDSDDEEQMETEDSEFSEQESEDEYSDDDD. The segment covering 317-345 has biased composition (acidic residues); that stretch reads DSDDEEQMETEDSEFSEQESEDEYSDDDD.

Belongs to the CAND family. As to quaternary structure, binds TBP, CNOT3 and UBE3C. In terms of processing, ubiquitinated and targeted for proteasomal degradation. As to expression, highly expressed in embryonic limb buds.

The protein resides in the nucleus. Functionally, probable assembly factor of SCF (SKP1-CUL1-F-box protein) E3 ubiquitin ligase complexes that promotes the exchange of the substrate-recognition F-box subunit in SCF complexes, thereby playing a key role in the cellular repertoire of SCF complexes. The protein is Cullin-associated NEDD8-dissociated protein 2 (Cand2) of Mus musculus (Mouse).